Reading from the N-terminus, the 281-residue chain is DegV domain-containing protein CPE2509 (281 aa).

Residues Ile-4–Lys-279 enclose the DegV domain. Residues Thr-60 and Ser-93 each coordinate hexadecanoate.

Its function is as follows. May bind long-chain fatty acids, such as palmitate, and may play a role in lipid transport or fatty acid metabolism. The protein is DegV domain-containing protein CPE2509 of Clostridium perfringens (strain 13 / Type A).